A 229-amino-acid chain; its full sequence is Large ribosomal subunit protein uL1 (229 aa).

It belongs to the universal ribosomal protein uL1 family. As to quaternary structure, part of the 50S ribosomal subunit.

In terms of biological role, binds directly to 23S rRNA. The L1 stalk is quite mobile in the ribosome, and is involved in E site tRNA release. Protein L1 is also a translational repressor protein, it controls the translation of the L11 operon by binding to its mRNA. This chain is Large ribosomal subunit protein uL1, found in Caulobacter sp. (strain K31).